Reading from the N-terminus, the 477-residue chain is uncharacterized protein (477 aa).

A signal peptide spans 1 to 18 (MWTALVLVWISSVPLSRS). Residues 19 to 427 (HTVPAVPRHL…DPLTPSLVNK (409 aa)) lie on the Extracellular side of the membrane. N-linked (GlcNAc...) asparagine glycans are attached at residues Asn-40, Asn-51, and Asn-77. Disordered regions lie at residues 79–103 (TRVTAETTPHGTNTSTPTTREGTAD), 239–366 (GTIN…TGGP), and 378–398 (KATAGTASAGPTSRSSGDVKV). Residues 85-97 (TTPHGTNTSTPTT) show a composition bias toward low complexity. Polar residues-rich tracts occupy residues 253–288 (PAKSTPTNTSSRNPIPTSGAQTQGTTIQVTTDQPVH) and 298–309 (PSNTTLEPNTPK). N-linked (GlcNAc...) asparagine glycosylation is present at Asn-300. Low complexity-rich tracts occupy residues 310 to 326 (SVASTSSAVVTTTQVQT), 348 to 361 (TSPTTQPSPLLPTQ), and 378 to 393 (KATAGTASAGPTSRSS). A helical membrane pass occupies residues 428 to 448 (MFLLVVLIVGVTLFIAVLMMF). Over 449–477 (ALQAYESYKKKDYTQVDYLINGMYADSEM) the chain is Cytoplasmic.

The protein localises to the cell membrane. It is found in the golgi apparatus. Its subcellular location is the trans-Golgi network membrane. This is an uncharacterized protein from Rattus norvegicus (Rat).